We begin with the raw amino-acid sequence, 165 residues long: Phosphopantetheine adenylyltransferase (165 aa).

Ser10 is a substrate binding site. ATP-binding positions include 10-11 and His18; that span reads SF. Lys42, Thr79, and Arg93 together coordinate substrate. ATP is bound by residues 94–96, Glu104, and 129–135; these read GLR and VRPITAT.

This sequence belongs to the bacterial CoaD family. As to quaternary structure, homohexamer. The cofactor is Mg(2+).

The protein localises to the cytoplasm. The catalysed reaction is (R)-4'-phosphopantetheine + ATP + H(+) = 3'-dephospho-CoA + diphosphate. It functions in the pathway cofactor biosynthesis; coenzyme A biosynthesis; CoA from (R)-pantothenate: step 4/5. In terms of biological role, reversibly transfers an adenylyl group from ATP to 4'-phosphopantetheine, yielding dephospho-CoA (dPCoA) and pyrophosphate. The polypeptide is Phosphopantetheine adenylyltransferase (Rhodopseudomonas palustris (strain BisB5)).